The following is a 503-amino-acid chain: Aspartyl/glutamyl-tRNA(Asn/Gln) amidotransferase subunit B (503 aa).

This sequence belongs to the GatB/GatE family. GatB subfamily. As to quaternary structure, heterotrimer of A, B and C subunits.

It carries out the reaction L-glutamyl-tRNA(Gln) + L-glutamine + ATP + H2O = L-glutaminyl-tRNA(Gln) + L-glutamate + ADP + phosphate + H(+). It catalyses the reaction L-aspartyl-tRNA(Asn) + L-glutamine + ATP + H2O = L-asparaginyl-tRNA(Asn) + L-glutamate + ADP + phosphate + 2 H(+). Allows the formation of correctly charged Asn-tRNA(Asn) or Gln-tRNA(Gln) through the transamidation of misacylated Asp-tRNA(Asn) or Glu-tRNA(Gln) in organisms which lack either or both of asparaginyl-tRNA or glutaminyl-tRNA synthetases. The reaction takes place in the presence of glutamine and ATP through an activated phospho-Asp-tRNA(Asn) or phospho-Glu-tRNA(Gln). In Roseobacter denitrificans (strain ATCC 33942 / OCh 114) (Erythrobacter sp. (strain OCh 114)), this protein is Aspartyl/glutamyl-tRNA(Asn/Gln) amidotransferase subunit B.